Consider the following 103-residue polypeptide: Pyrimidine/purine nucleoside phosphorylase (103 aa).

The protein belongs to the nucleoside phosphorylase PpnP family.

The catalysed reaction is a purine D-ribonucleoside + phosphate = a purine nucleobase + alpha-D-ribose 1-phosphate. The enzyme catalyses adenosine + phosphate = alpha-D-ribose 1-phosphate + adenine. It carries out the reaction cytidine + phosphate = cytosine + alpha-D-ribose 1-phosphate. It catalyses the reaction guanosine + phosphate = alpha-D-ribose 1-phosphate + guanine. The catalysed reaction is inosine + phosphate = alpha-D-ribose 1-phosphate + hypoxanthine. The enzyme catalyses thymidine + phosphate = 2-deoxy-alpha-D-ribose 1-phosphate + thymine. It carries out the reaction uridine + phosphate = alpha-D-ribose 1-phosphate + uracil. It catalyses the reaction xanthosine + phosphate = alpha-D-ribose 1-phosphate + xanthine. Functionally, catalyzes the phosphorolysis of diverse nucleosides, yielding D-ribose 1-phosphate and the respective free bases. Can use uridine, adenosine, guanosine, cytidine, thymidine, inosine and xanthosine as substrates. Also catalyzes the reverse reactions. The chain is Pyrimidine/purine nucleoside phosphorylase from Shewanella sp. (strain ANA-3).